Reading from the N-terminus, the 211-residue chain is Heat shock 70 kDa protein 4L (211 aa).

A Phosphoserine modification is found at Ser161.

This sequence belongs to the heat shock protein 70 family. In terms of assembly, homodimer.

Its subcellular location is the cytoplasm. It localises to the nucleus. In terms of biological role, possesses chaperone activity in vitro where it inhibits aggregation of citrate synthase. This is Heat shock 70 kDa protein 4L from Mesocricetus auratus (Golden hamster).